The sequence spans 407 residues: Zinc finger protein 260 (407 aa).

Disordered stretches follow at residues 1–21, 39–72, and 96–124; these read MLES…PGES, VEHK…HLRS, and SHQK…RNQR. Residues 23 to 45 form a C2H2-type 1 zinc finger; that stretch reads YECNECKETFSLEQNFVEHKKTH. Composition is skewed to basic and acidic residues over residues 39–51 and 100–111; these read VEHK…EKSP and QHTEERPSESKK. The C2H2-type 2; degenerate zinc finger occupies 51–73; it reads PECTGCGEESSQASSLTLHLRSR. The C2H2-type 3 zinc finger occupies 79-101; that stretch reads YKCGECGKAFSQRGNFLSHQKQH. The segment covering 115-124 has biased composition (polar residues); the sequence is PMTTTVRNQR. 10 C2H2-type zinc fingers span residues 131–153, 159–181, 187–209, 215–237, 243–265, 271–293, 299–321, 327–349, 355–377, and 383–405; these read YACK…EKIH, FECS…QNIH, FKCN…QRIH, YECK…QRSH, YTCK…EKIH, YKCN…HNIH, YECN…VRIH, YECK…MRSH, YGCN…MRIH, and YQCS…QRIH.

It belongs to the krueppel C2H2-type zinc-finger protein family. As to quaternary structure, binds DNA. Interacts with GATA4. In terms of tissue distribution, predominantly present in heart. Outside the heart, it is detected in embryonic and postnatal vascular smooth muscle cells and in epithelial cells of the lung, gut and kidney at sites of epithelial morphogenesis and in the spinal cord (at protein level).

It localises to the nucleus. Transcription factor that acts as a cardiac regulator and an effector of alpha1-adrenergic signaling. Binds to PE response elements (PERE) present in the promoter of genes such as ANF/NPPA and acts as a direct transcriptional activator of NPPA. Also acts as a cofactor with GATA4, a key cardiac regulator. This is Zinc finger protein 260 (Znf260) from Mus musculus (Mouse).